We begin with the raw amino-acid sequence, 932 residues long: Phosphoenolpyruvate carboxylase (932 aa).

Residues H164 and K594 contribute to the active site.

It belongs to the PEPCase type 1 family. It depends on Mg(2+) as a cofactor.

It carries out the reaction oxaloacetate + phosphate = phosphoenolpyruvate + hydrogencarbonate. Its function is as follows. Forms oxaloacetate, a four-carbon dicarboxylic acid source for the tricarboxylic acid cycle. This chain is Phosphoenolpyruvate carboxylase, found in Bradyrhizobium diazoefficiens (strain JCM 10833 / BCRC 13528 / IAM 13628 / NBRC 14792 / USDA 110).